The sequence spans 263 residues: Ribonuclease HII (263 aa).

The region spanning 71 to 262 (QAIAGIDEVG…VKSMCCDSTN (192 aa)) is the RNase H type-2 domain. A divalent metal cation is bound by residues Asp-77, Glu-78, and Asp-172.

The protein belongs to the RNase HII family. The cofactor is Mn(2+). Mg(2+) is required as a cofactor.

Its subcellular location is the cytoplasm. The enzyme catalyses Endonucleolytic cleavage to 5'-phosphomonoester.. Endonuclease that specifically degrades the RNA of RNA-DNA hybrids. In Streptococcus pyogenes serotype M3 (strain ATCC BAA-595 / MGAS315), this protein is Ribonuclease HII.